The primary structure comprises 285 residues: 3',5'-nucleoside bisphosphate phosphatase (285 aa).

The Mn(2+) site is built by histidine 7, histidine 9, aspartate 14, histidine 39, glutamate 64, and histidine 75. Residues aspartate 14 and histidine 39 each coordinate substrate. Substrate-binding positions include 99 to 102 (RLER) and 134 to 135 (RT). Positions 191, 248, and 250 each coordinate Mn(2+). Histidine 250 lines the substrate pocket.

This sequence belongs to the PHP family. As to quaternary structure, monomer. Requires Mn(2+) as cofactor.

It carries out the reaction a ribonucleoside 3',5'-bisphosphate + H2O = a ribonucleoside 5'-phosphate + phosphate. Hydrolyzes 3',5'-bisphosphonucleosides (pGp, pCp, pUp, and pIp) to nucleoside 5'-phosphate and orthophosphate. Has similar catalytic efficiencies with all the bases. Also shows activity with ribonucleoside 2'-deoxyribonucleoside 3',5'-bisphosphates. Does not show activity with nucleoside 2',5'-bisphosphates. This Chromobacterium violaceum (strain ATCC 12472 / DSM 30191 / JCM 1249 / CCUG 213 / NBRC 12614 / NCIMB 9131 / NCTC 9757 / MK) protein is 3',5'-nucleoside bisphosphate phosphatase.